A 56-amino-acid polypeptide reads, in one-letter code: Large ribosomal subunit protein bL32 (56 aa).

Residues 1 to 26 (MAVQQNKPTRSKRGMRRSHDSLTTAA) form a disordered region.

Belongs to the bacterial ribosomal protein bL32 family.

This chain is Large ribosomal subunit protein bL32, found in Erwinia tasmaniensis (strain DSM 17950 / CFBP 7177 / CIP 109463 / NCPPB 4357 / Et1/99).